A 251-amino-acid polypeptide reads, in one-letter code: Hydroxyacylglutathione hydrolase (251 aa).

Positions 53, 55, 57, 58, 110, 127, and 165 each coordinate Zn(2+).

It belongs to the metallo-beta-lactamase superfamily. Glyoxalase II family. In terms of assembly, monomer. Zn(2+) serves as cofactor.

It carries out the reaction an S-(2-hydroxyacyl)glutathione + H2O = a 2-hydroxy carboxylate + glutathione + H(+). Its pathway is secondary metabolite metabolism; methylglyoxal degradation; (R)-lactate from methylglyoxal: step 2/2. In terms of biological role, thiolesterase that catalyzes the hydrolysis of S-D-lactoyl-glutathione to form glutathione and D-lactic acid. The chain is Hydroxyacylglutathione hydrolase from Salmonella typhi.